A 166-amino-acid polypeptide reads, in one-letter code: Endoribonuclease YbeY (166 aa).

The Zn(2+) site is built by histidine 126, histidine 130, and histidine 136.

The protein belongs to the endoribonuclease YbeY family. Requires Zn(2+) as cofactor.

The protein resides in the cytoplasm. Single strand-specific metallo-endoribonuclease involved in late-stage 70S ribosome quality control and in maturation of the 3' terminus of the 16S rRNA. The chain is Endoribonuclease YbeY from Laribacter hongkongensis (strain HLHK9).